The primary structure comprises 341 residues: DNA-directed RNA polymerase subunit alpha (341 aa).

The alpha N-terminal domain (alpha-NTD) stretch occupies residues 1–233 (MIRDEIPISA…NLFIPFLHAE (233 aa)). Residues 265–341 (TKGVTFKHIF…NLPKNKLHFH (77 aa)) are alpha C-terminal domain (alpha-CTD).

It belongs to the RNA polymerase alpha chain family. As to quaternary structure, in plastids the minimal PEP RNA polymerase catalytic core is composed of four subunits: alpha, beta, beta', and beta''. When a (nuclear-encoded) sigma factor is associated with the core the holoenzyme is formed, which can initiate transcription.

It is found in the plastid. The protein localises to the chloroplast. The catalysed reaction is RNA(n) + a ribonucleoside 5'-triphosphate = RNA(n+1) + diphosphate. Its function is as follows. DNA-dependent RNA polymerase catalyzes the transcription of DNA into RNA using the four ribonucleoside triphosphates as substrates. The chain is DNA-directed RNA polymerase subunit alpha from Takakia lepidozioides (Moss).